Reading from the N-terminus, the 84-residue chain is Anaphase-promoting complex subunit 11 (84 aa).

The Zn(2+) site is built by cysteine 23, cysteine 26, cysteine 34, cysteine 37, cysteine 44, cysteine 51, histidine 53, histidine 56, histidine 58, cysteine 59, cysteine 73, and cysteine 76. The RING-type zinc-finger motif lies at 34 to 77; the sequence is CPDCKVPGDDCPLVWGQCSHCFHMHCILKWLNAQQVQQHCPMCR.

It belongs to the RING-box family. As to quaternary structure, the mammalian APC/C is composed at least of 14 distinct subunits ANAPC1, ANAPC2, CDC27/APC3, ANAPC4, ANAPC5, CDC16/APC6, ANAPC7, CDC23/APC8, ANAPC10, ANAPC11, CDC26/APC12, ANAPC13, ANAPC15 and ANAPC16 that assemble into a complex of at least 19 chains with a combined molecular mass of around 1.2 MDa; APC/C interacts with FZR1 and FBXO5. Interacts with the cullin domain of ANAPC2. Interacts with UBE2D2. Auto-ubiquitinated.

The protein localises to the cytoplasm. It is found in the nucleus. It participates in protein modification; protein ubiquitination. Together with the cullin protein ANAPC2, constitutes the catalytic component of the anaphase promoting complex/cyclosome (APC/C), a cell cycle-regulated E3 ubiquitin ligase that controls progression through mitosis and the G1 phase of the cell cycle. The APC/C complex acts by mediating ubiquitination and subsequent degradation of target proteins: it mainly mediates the formation of 'Lys-11'-linked polyubiquitin chains and, to a lower extent, the formation of 'Lys-48'- and 'Lys-63'-linked polyubiquitin chains. The APC/C complex catalyzes assembly of branched 'Lys-11'-/'Lys-48'-linked branched ubiquitin chains on target proteins. May recruit the E2 ubiquitin-conjugating enzymes to the complex. The chain is Anaphase-promoting complex subunit 11 (ANAPC11) from Bos taurus (Bovine).